Consider the following 439-residue polypeptide: Trehalose-phosphatase (439 aa).

The Mg(2+) site is built by Asp-163 and Asp-165. Asp-165 functions as the Proton donor/acceptor in the catalytic mechanism. A substrate-binding site is contributed by 282 to 284 (QRK). A Mg(2+)-binding site is contributed by Asp-373.

This sequence belongs to the gob-1 trehalose phosphatase family. The cofactor is Mg(2+). In terms of tissue distribution, ubiquitously expressed. Strong expression in intestine.

It catalyses the reaction alpha,alpha-trehalose 6-phosphate + H2O = alpha,alpha-trehalose + phosphate. Its function is as follows. Catalyzes the hydrolysis of trehalose 6-phosphate to trehalose and phosphate; prevents the accumulation of toxic levels of trehalose 6-phosphate. In Caenorhabditis elegans, this protein is Trehalose-phosphatase.